Reading from the N-terminus, the 97-residue chain is Aspartyl/glutamyl-tRNA(Asn/Gln) amidotransferase subunit C (97 aa).

The segment covering 74 to 84 has biased composition (low complexity); the sequence is TPEEATAAAPA. Residues 74–97 are disordered; that stretch reads TPEEATAAAPAREGTAFKVPRIIE.

It belongs to the GatC family. Heterotrimer of A, B and C subunits.

It carries out the reaction L-glutamyl-tRNA(Gln) + L-glutamine + ATP + H2O = L-glutaminyl-tRNA(Gln) + L-glutamate + ADP + phosphate + H(+). The enzyme catalyses L-aspartyl-tRNA(Asn) + L-glutamine + ATP + H2O = L-asparaginyl-tRNA(Asn) + L-glutamate + ADP + phosphate + 2 H(+). Allows the formation of correctly charged Asn-tRNA(Asn) or Gln-tRNA(Gln) through the transamidation of misacylated Asp-tRNA(Asn) or Glu-tRNA(Gln) in organisms which lack either or both of asparaginyl-tRNA or glutaminyl-tRNA synthetases. The reaction takes place in the presence of glutamine and ATP through an activated phospho-Asp-tRNA(Asn) or phospho-Glu-tRNA(Gln). The protein is Aspartyl/glutamyl-tRNA(Asn/Gln) amidotransferase subunit C of Anaeromyxobacter dehalogenans (strain 2CP-1 / ATCC BAA-258).